Here is a 233-residue protein sequence, read N- to C-terminus: Adenosine 5'-phosphosulfate reductase (233 aa).

[4Fe-4S] cluster contacts are provided by C120, C121, C203, and C206. C229 acts as the Nucleophile; cysteine thiosulfonate intermediate in catalysis.

Belongs to the PAPS reductase family. CysH subfamily. The cofactor is [4Fe-4S] cluster.

Its subcellular location is the cytoplasm. It catalyses the reaction [thioredoxin]-disulfide + sulfite + AMP + 2 H(+) = adenosine 5'-phosphosulfate + [thioredoxin]-dithiol. Its pathway is sulfur metabolism; hydrogen sulfide biosynthesis; sulfite from sulfate. Catalyzes the formation of sulfite from adenosine 5'-phosphosulfate (APS) using thioredoxin as an electron donor. The chain is Adenosine 5'-phosphosulfate reductase from Bacillus pumilus (strain SAFR-032).